Here is a 245-residue protein sequence, read N- to C-terminus: Ribonuclease PH (245 aa).

Phosphate-binding positions include arginine 86 and 124–126 (GTR).

This sequence belongs to the RNase PH family. As to quaternary structure, homohexameric ring arranged as a trimer of dimers. It has been suggested that the active form is the dimer which binds tRNA and that the hexameric form protects the substrate recognition loop (approximately residues 65-82) from proteolysis.

The enzyme catalyses tRNA(n+1) + phosphate = tRNA(n) + a ribonucleoside 5'-diphosphate. In terms of biological role, phosphorolytic 3'-5' exoribonuclease that plays an important role in tRNA 3'-end maturation. Removes nucleotide residues following the 3'-CCA terminus of tRNAs; can also add nucleotides to the ends of RNA molecules by using nucleoside diphosphates as substrates, but this may not be physiologically important. Probably plays a role in initiation of 16S rRNA degradation (leading to ribosome degradation) during starvation. Plays a role in the secondary pathway of 23S rRNA 3' end maturation. The chain is Ribonuclease PH from Bacillus subtilis (strain 168).